The sequence spans 348 residues: Heptaprenyl diphosphate synthase component 2 (348 aa).

Residues Lys-73, Arg-76, and His-105 each coordinate isopentenyl diphosphate. Residues Asp-112 and Asp-116 each coordinate Mg(2+). An all-trans-hexaprenyl diphosphate-binding site is contributed by Arg-121. Arg-122 contacts isopentenyl diphosphate. All-trans-hexaprenyl diphosphate is bound by residues Lys-198, Thr-199, and Gln-236.

This sequence belongs to the FPP/GGPP synthase family. As to quaternary structure, heterodimer of component I and II. The cofactor is Mg(2+).

It catalyses the reaction 4 isopentenyl diphosphate + (2E,6E)-farnesyl diphosphate = all-trans-heptaprenyl diphosphate + 4 diphosphate. Functionally, supplies heptaprenyl diphosphate, the precursor for the side chain of the isoprenoid quinone menaquinone-7 (MQ-7). This chain is Heptaprenyl diphosphate synthase component 2 (hepT), found in Bacillus subtilis (strain 168).